The primary structure comprises 177 residues: Large ribosomal subunit protein bL19 (177 aa).

This sequence belongs to the bacterial ribosomal protein bL19 family.

Functionally, this protein is located at the 30S-50S ribosomal subunit interface and may play a role in the structure and function of the aminoacyl-tRNA binding site. The polypeptide is Large ribosomal subunit protein bL19 (Sinorhizobium medicae (strain WSM419) (Ensifer medicae)).